A 114-amino-acid polypeptide reads, in one-letter code: Ferritin-like protein (114 aa).

Positions 29, 59, and 62 each coordinate Fe cation. Positions 86 to 114 are cargo-loading peptide; that stretch reads FTDKPITEIEEETSGGSENTGGDLGIRKL. Residues 94-114 form a disordered region; it reads IEEETSGGSENTGGDLGIRKL. Residues 103-114 show a composition bias toward gly residues; sequence ENTGGDLGIRKL.

The protein belongs to the ferritin-like superfamily. In terms of assembly, probably forms a decamer which binds to the pentameric axis of the interior of the protein shell; as the Flp cargo protein is flexible, packing into the shell is not rigid. 3, 4 or 5 cargo decamers bind inside the encapulin nanocompartment. Requires Fe cation as cofactor.

The protein localises to the encapsulin nanocompartment. Its function is as follows. Cargo protein of a type 1 encapsulin nanocompartment. A ferritin-like protein that probably stores iron in the encapsulin nanocompartment. The protein is Ferritin-like protein of Thermotoga maritima (strain ATCC 43589 / DSM 3109 / JCM 10099 / NBRC 100826 / MSB8).